The following is a 132-amino-acid chain: Small ribosomal subunit protein uS8 (132 aa).

This sequence belongs to the universal ribosomal protein uS8 family. Part of the 30S ribosomal subunit. Contacts proteins S5 and S12.

Its function is as follows. One of the primary rRNA binding proteins, it binds directly to 16S rRNA central domain where it helps coordinate assembly of the platform of the 30S subunit. The sequence is that of Small ribosomal subunit protein uS8 from Rhizobium meliloti (strain 1021) (Ensifer meliloti).